Consider the following 376-residue polypeptide: UPF0754 membrane protein SE_1527 (376 aa).

A run of 2 helical transmembrane segments spans residues 4–24 and 356–376; these read ILLV…TNMI and TLGF…AIFV.

This sequence belongs to the UPF0754 family.

Its subcellular location is the cell membrane. This chain is UPF0754 membrane protein SE_1527, found in Staphylococcus epidermidis (strain ATCC 12228 / FDA PCI 1200).